The sequence spans 402 residues: S-adenosylmethionine synthase (402 aa).

Residue His16 participates in ATP binding. Residue Asp18 coordinates Mg(2+). Residue Glu44 coordinates K(+). Glu57 and Gln103 together coordinate L-methionine. The interval 103 to 113 (QSPDIAQGVDT) is flexible loop. ATP is bound by residues 178–180 (DGK), 249–250 (KF), Asp258, 264–265 (RK), Ala281, and Lys285. L-methionine is bound at residue Asp258. Lys289 serves as a coordination point for L-methionine.

This sequence belongs to the AdoMet synthase family. Homotetramer; dimer of dimers. Mg(2+) serves as cofactor. K(+) is required as a cofactor.

The protein resides in the cytoplasm. The enzyme catalyses L-methionine + ATP + H2O = S-adenosyl-L-methionine + phosphate + diphosphate. The protein operates within amino-acid biosynthesis; S-adenosyl-L-methionine biosynthesis; S-adenosyl-L-methionine from L-methionine: step 1/1. Its function is as follows. Catalyzes the formation of S-adenosylmethionine (AdoMet) from methionine and ATP. The overall synthetic reaction is composed of two sequential steps, AdoMet formation and the subsequent tripolyphosphate hydrolysis which occurs prior to release of AdoMet from the enzyme. The chain is S-adenosylmethionine synthase from Mycolicibacterium gilvum (strain PYR-GCK) (Mycobacterium gilvum (strain PYR-GCK)).